The chain runs to 747 residues: DNA damage checkpoint protein LCD1 (747 aa).

3 positions are modified to phosphoserine: Ser10, Ser11, and Ser76. A coiled-coil region spans residues 62–139; the sequence is NQLVNQLNKA…MEARGKSKRE (78 aa). The interval 145–180 is disordered; the sequence is KPPSTTLSTNTNTITPDSSSVAIEAKPQSPQSKKRK. The segment covering 146 to 160 has biased composition (low complexity); sequence PPSTTLSTNTNTITP.

Forms a complex with MEC1. Post-translationally, phosphorylated by MEC1 in a cell cycle dependent manner and in response to DNA damage.

Its subcellular location is the cytoplasm. The protein localises to the nucleus. Functionally, forms a complex with the serine/threonine kinase MEC1 which activates checkpoint signaling upon genotoxic stresses. The MEC1-LCD1 complex is recruited by the single-strand-binding protein complex RPA to DNA lesions in order to initiate the DNA repair by homologous recombination, after the MRX-complex and TEL1 are displaced. Required for the recruitment of MEC1 to DNA lesions, the activation of CHK1 and RAD53 kinases and phosphorylation of RAD9 in response to DNA damage. Required for cell growth and meiotic recombination. The protein is DNA damage checkpoint protein LCD1 (LCD1) of Saccharomyces cerevisiae (strain ATCC 204508 / S288c) (Baker's yeast).